Consider the following 626-residue polypeptide: Janus kinase and microtubule-interacting protein 1 (626 aa).

The disordered stretch occupies residues Met1–Glu25. Residues Met1–Val365 form a mediates association with microtubules region. Coiled coils occupy residues Glu13 to Arg255 and Glu284 to Ser413. Residues Val365–Met626 form a mediates interaction with TYK2 and GABBR1 region. Ser382 bears the Phosphoserine mark. Residues Glu452 to Thr461 are compositionally biased toward polar residues. The disordered stretch occupies residues Glu452–Arg481. At Thr470 the chain carries Phosphothreonine. Positions Gln490–Arg604 form a coiled coil.

The protein belongs to the JAKMIP family. Homodimer. Interacts with JAK1 and TYK2. Forms a complex with GABBR1 and KIF5B/kinesin-1. In terms of processing, phosphorylated.

The protein resides in the cytoplasm. It is found in the cytoskeleton. It localises to the membrane. In terms of biological role, associates with microtubules and may play a role in the microtubule-dependent transport of the GABA-B receptor. May play a role in JAK1 signaling and regulate microtubule cytoskeleton rearrangements. The protein is Janus kinase and microtubule-interacting protein 1 (Jakmip1) of Mus musculus (Mouse).